The chain runs to 667 residues: Zeaxanthin epoxidase, chloroplastic (667 aa).

Residues 1-59 (MGSTPFCYSINPSPSKLDFTRTHVFSPVSKQFYLDLSSFSGKPGGVSGFRSRRALLGVK) constitute a chloroplast transit peptide. Residues 82 to 110 (RVLV…LVFE) and 360 to 373 (GFTW…LLGD) each bind FAD. Residues 558–612 (CIVGSEPDQDFPGMRIVIPSSQVSKMHARVIYKDGAFFLMDLRSEHGTYVTDNEG) form the FHA domain.

FAD is required as a cofactor. As to expression, expressed in leaves, stems and flowers, and at lower levels in roots and siliques.

It is found in the plastid. The protein localises to the chloroplast. It carries out the reaction all-trans-zeaxanthin + 4 reduced [2Fe-2S]-[ferredoxin] + 2 O2 + 4 H(+) = all-trans-violaxanthin + 4 oxidized [2Fe-2S]-[ferredoxin] + 2 H2O. It functions in the pathway plant hormone biosynthesis; abscisate biosynthesis. Zeaxanthin epoxidase that plays an important role in the xanthophyll cycle and abscisic acid (ABA) biosynthesis. Converts zeaxanthin into antheraxanthin and subsequently violaxanthin. Required for resistance to osmotic and drought stresses, ABA-dependent stomatal closure, seed development and dormancy, modulation of defense gene expression and disease resistance and non-photochemical quencing (NPQ). Through its role in ABA biosynthesis, regulates the expression of stress-responsive genes such as RD29A during osmotic stress and is required for normal plant growth during vegetative development. Is required for late skotomorphogenic growth through its role in the xanthophyll carotenoids neoxanthin, violaxanthin and antheraxanthin biosynthesis. Required for beta-aminobutyric acid (BABA)-induced priming in disease resistance, tolerance to salt and drought stresses and sterility. Participates in NPQ by regulating the level of zeaxanthin in photosynthetic energy conversion. NPQ is a process that maintains the balance between dissipation and utilization of light energy to minimize the generation of oxidizing molecules and the molecular damages they can generate. This is Zeaxanthin epoxidase, chloroplastic (ZEP) from Arabidopsis thaliana (Mouse-ear cress).